Consider the following 2027-residue polypeptide: Mediator of RNA polymerase II transcription subunit 12 (2027 aa).

A Phosphotyrosine modification is found at tyrosine 13. Disordered regions lie at residues 170–191, 474–516, 538–563, and 1088–1113; these read QSTS…TPST, GAPG…MDID, MPCE…PPKE, and TVTG…QGGR. Phosphoserine is present on residues serine 482, serine 512, serine 545, and serine 547. Residues 549–563 are compositionally biased toward basic and acidic residues; sequence EKPDVEKEVKPPPKE. A phosphoserine mark is found at serine 1105 and serine 1116. Over residues 1241-1258 the composition is skewed to low complexity; the sequence is AETGSSSGSTASNMPSSS. Disordered regions lie at residues 1241 to 1262, 1297 to 1321, and 1585 to 1676; these read AETG…KTKP, ELEK…KSMS, and YLEP…PGSI. Composition is skewed to basic and acidic residues over residues 1297 to 1316 and 1605 to 1618; these read ELEK…DRQK and EPEK…KTDK. The tract at residues 1463-1901 is interaction with CTNNB1 and GLI3; the sequence is LAKKLQKELG…VRSTAILPEQ (439 aa). The span at 1631–1640 shows a compositional bias: basic residues; the sequence is KKSTKGKKRS. Position 1645 is an N6-acetyllysine (lysine 1645). Arginine 1746 is modified (asymmetric dimethylarginine; alternate). Omega-N-methylarginine; alternate is present on arginine 1746. Residue arginine 1757 is modified to Omega-N-methylarginine. Residues 1805-1848 are disordered; the sequence is QHTGPAGTMVPPSYSSQPYQSTHPSTNPTLVDPTRHLQQRPSGY. The segment covering 1815–1830 has biased composition (low complexity); that stretch reads PPSYSSQPYQSTHPST. Asymmetric dimethylarginine is present on residues arginine 1844 and arginine 1865. 3 stretches are compositionally biased toward low complexity: residues 1965–1975, 1983–1999, and 2008–2021; these read QHQQQQQQQAA, SQPQ…QQQQ, and LQQQ…QPST. Disordered regions lie at residues 1965–1999 and 2008–2027; these read QHQQ…QQQQ and LQQQ…FGRY.

This sequence belongs to the Mediator complex subunit 12 family. In terms of assembly, component of the Mediator complex, which is composed of MED1, MED4, MED6, MED7, MED8, MED9, MED10, MED11, MED12, MED13, MED13L, MED14, MED15, MED16, MED17, MED18, MED19, MED20, MED21, MED22, MED23, MED24, MED25, MED26, MED27, MED29, MED30, MED31, CCNC, CDK8 and CDC2L6/CDK11. The MED12, MED13, CCNC and CDK8 subunits form a distinct module termed the CDK8 module. Mediator containing the CDK8 module is less active than Mediator lacking this module in supporting transcriptional activation. Individual preparations of the Mediator complex lacking one or more distinct subunits have been variously termed ARC, CRSP, DRIP, PC2, SMCC and TRAP. Also interacts with CTNNB1 and GLI3.

It localises to the nucleus. In terms of biological role, component of the Mediator complex, a coactivator involved in the regulated transcription of nearly all RNA polymerase II-dependent genes. Mediator functions as a bridge to convey information from gene-specific regulatory proteins to the basal RNA polymerase II transcription machinery. Mediator is recruited to promoters by direct interactions with regulatory proteins and serves as a scaffold for the assembly of a functional preinitiation complex with RNA polymerase II and the general transcription factors. This subunit may specifically regulate transcription of targets of the Wnt signaling pathway and SHH signaling pathway. This chain is Mediator of RNA polymerase II transcription subunit 12 (MED12), found in Pan troglodytes (Chimpanzee).